We begin with the raw amino-acid sequence, 425 residues long: MKTMDKRILLRALESEIERTTGCTDPGAVCLAVRAAAIELGVDPEKIVVTVSPNIYKNGINVGVPGTGMRGLHIAAGLGAVIKSTSSGLALLDAVDPADVERAVQLVNNGRVTITHAETTSALYIKAEVFSGAHYAHAVIRDDYTSIVEVGLDGKKVSSPRGMPVKTKHESLKGYTLEELFTSIDTMTVEELTFLRDAAEVNRKAAEAGLESGPCPLGKALYSGLAGAGVRHMAAARAQALTAAACEARMSGMQVPIIAIAGSGNHGIASFLGILAVAETLASPEEKLLKALAISSTVTVAIKEHSTKLSAFCGCAVAASTGVAAGTVYLLGGSYEEITHAMQSVIGTLAGMVCDGAKESCAFKLSSSVALAIQFGHLSLEDAYIKEGMGIVSQSIEKTFENLGRLNNPGMVTADKLMLQMISGH.

It belongs to the UPF0597 family.

The sequence is that of UPF0597 protein UNCMA_16400 from Methanocella arvoryzae (strain DSM 22066 / NBRC 105507 / MRE50).